Here is a 520-residue protein sequence, read N- to C-terminus: Cholesterol side-chain cleavage enzyme, mitochondrial (520 aa).

Residues 1 to 39 constitute a mitochondrion transit peptide; the sequence is MLVRGLPLRSVLVKGCQPLLSAPREGPGHPRVPTGEGAG. Residues 19 to 47 form a disordered region; that stretch reads LLSAPREGPGHPRVPTGEGAGMSSHSPRP. Heme is bound at residue Cys461.

This sequence belongs to the cytochrome P450 family. Interacts with FDX1/adrenodoxin. Heme serves as cofactor.

The protein resides in the mitochondrion inner membrane. It carries out the reaction 6 reduced [adrenodoxin] + cholesterol + 3 O2 + 6 H(+) = 4-methylpentanal + pregnenolone + 6 oxidized [adrenodoxin] + 4 H2O. The catalysed reaction is 2 reduced [adrenodoxin] + cholesterol + O2 + 2 H(+) = (22R)-hydroxycholesterol + 2 oxidized [adrenodoxin] + H2O. The enzyme catalyses (22R)-hydroxycholesterol + 2 reduced [adrenodoxin] + O2 + 2 H(+) = (20R,22R)-20,22-dihydroxycholesterol + 2 oxidized [adrenodoxin] + H2O. It catalyses the reaction (20R,22R)-20,22-dihydroxycholesterol + 2 reduced [adrenodoxin] + O2 + 2 H(+) = 4-methylpentanal + pregnenolone + 2 oxidized [adrenodoxin] + 2 H2O. It functions in the pathway lipid metabolism; C21-steroid hormone metabolism. The protein operates within steroid metabolism; cholesterol metabolism. Its function is as follows. A cytochrome P450 monooxygenase that catalyzes the side-chain hydroxylation and cleavage of cholesterol to pregnenolone, the precursor of most steroid hormones. Catalyzes three sequential oxidation reactions of cholesterol, namely the hydroxylation at C22 followed with the hydroxylation at C20 to yield 20R,22R-hydroxycholesterol that is further cleaved between C20 and C22 to yield the C21-steroid pregnenolone and 4-methylpentanal. Mechanistically, uses molecular oxygen inserting one oxygen atom into a substrate and reducing the second into a water molecule. Two electrons are provided by NADPH via a two-protein mitochondrial transfer system comprising flavoprotein FDXR (adrenodoxin/ferredoxin reductase) and nonheme iron-sulfur protein FDX1 or FDX2 (adrenodoxin/ferredoxin). The polypeptide is Cholesterol side-chain cleavage enzyme, mitochondrial (CYP11A1) (Equus caballus (Horse)).